A 129-amino-acid polypeptide reads, in one-letter code: Protein NrdI (129 aa).

Belongs to the NrdI family.

Probably involved in ribonucleotide reductase function. The protein is Protein NrdI of Macrococcus caseolyticus (strain JCSC5402) (Macrococcoides caseolyticum).